A 100-amino-acid polypeptide reads, in one-letter code: Urease subunit gamma (100 aa).

Belongs to the urease gamma subunit family. In terms of assembly, heterotrimer of UreA (gamma), UreB (beta) and UreC (alpha) subunits. Three heterotrimers associate to form the active enzyme.

It is found in the cytoplasm. It carries out the reaction urea + 2 H2O + H(+) = hydrogencarbonate + 2 NH4(+). It functions in the pathway nitrogen metabolism; urea degradation; CO(2) and NH(3) from urea (urease route): step 1/1. The chain is Urease subunit gamma from Pseudomonas fluorescens (strain Pf0-1).